The chain runs to 701 residues: Polyribonucleotide nucleotidyltransferase (701 aa).

Residues Asp487 and Asp493 each contribute to the Mg(2+) site. A KH domain is found at 554–613; the sequence is PTMIAMKIDTDKIRDVIGKGGATIRAICEETKASIDIEDDGSIKIFGETKEAADAAKQRI. The 69-residue stretch at 623-691 folds into the S1 motif domain; sequence GKIYVGKVER…NRGRIKLSIK (69 aa).

The protein belongs to the polyribonucleotide nucleotidyltransferase family. As to quaternary structure, component of the RNA degradosome, which is a multiprotein complex involved in RNA processing and mRNA degradation. The cofactor is Mg(2+).

The protein resides in the cytoplasm. The enzyme catalyses RNA(n+1) + phosphate = RNA(n) + a ribonucleoside 5'-diphosphate. Involved in mRNA degradation. Catalyzes the phosphorolysis of single-stranded polyribonucleotides processively in the 3'- to 5'-direction. In Pseudomonas entomophila (strain L48), this protein is Polyribonucleotide nucleotidyltransferase.